A 428-amino-acid polypeptide reads, in one-letter code: Adenylosuccinate synthetase (428 aa).

Residues 12–18 (GDEGKGK) and 40–42 (GHT) contribute to the GTP site. The Proton acceptor role is filled by Asp13. 2 residues coordinate Mg(2+): Asp13 and Gly40. IMP is bound by residues 13–16 (DEGK), 38–41 (NAGH), Thr128, Arg142, Gln223, Thr238, and Arg302. His41 functions as the Proton donor in the catalytic mechanism. 298–304 (VTTGRPR) contacts substrate. Residues Arg304, 330-332 (KLD), and 413-415 (GVG) contribute to the GTP site.

Belongs to the adenylosuccinate synthetase family. As to quaternary structure, homodimer. Mg(2+) is required as a cofactor.

The protein localises to the cytoplasm. The enzyme catalyses IMP + L-aspartate + GTP = N(6)-(1,2-dicarboxyethyl)-AMP + GDP + phosphate + 2 H(+). It functions in the pathway purine metabolism; AMP biosynthesis via de novo pathway; AMP from IMP: step 1/2. Functionally, plays an important role in the de novo pathway of purine nucleotide biosynthesis. Catalyzes the first committed step in the biosynthesis of AMP from IMP. The polypeptide is Adenylosuccinate synthetase (Acidothermus cellulolyticus (strain ATCC 43068 / DSM 8971 / 11B)).